The sequence spans 206 residues: Ras-related protein RABG3a (206 aa).

15-22 (GDSGVGKT) contributes to the GTP binding site. An Effector region motif is present at residues 37-45 (YKATIGADF). Residues 63-67 (DTAGQ), 125-128 (NKID), and 158-159 (SA) each bind GTP. 2 S-geranylgeranyl cysteine lipidation sites follow: cysteine 204 and cysteine 206. Residue cysteine 206 is modified to Cysteine methyl ester.

It belongs to the small GTPase superfamily. Rab family.

The protein resides in the cell membrane. Functionally, intracellular vesicle trafficking and protein transport. The polypeptide is Ras-related protein RABG3a (RABG3A) (Arabidopsis thaliana (Mouse-ear cress)).